Reading from the N-terminus, the 301-residue chain is Securin (301 aa).

Disordered stretches follow at residues 1–55, 82–120, and 218–284; these read MLPR…RTVL, DSPT…DTPL, and ASDQ…RSIH. Positions 33–36 match the D-box 1 motif; sequence RAPL. Polar residues predominate over residues 38–50; it reads STKQSNAPSSVTV. Residues 52 to 55 carry the D-box 2 motif; sequence RTVL. Polar residues-rich tracts occupy residues 88–98, 110–119, and 231–245; these read EPNSQGISRSA, PRRSSLTDTP, and VSKQ…STVY. Repeats lie at residues 250-260 and 270-280; these read ASGKSIPRPLS and ASGNSRRRPLS.

It belongs to the securin family. In terms of assembly, interacts with the caspase-like cut1, and prevents its protease activity probably by covering its active site. Post-translationally, ubiquitinated by the anaphase promoting complex (APC) at the onset of anaphase, conducting to its degradation.

Its subcellular location is the cytoplasm. The protein resides in the nucleus. Its function is as follows. Regulatory protein, which plays a central role in chromosome stability. Probably acts by blocking the action of key proteins. During the mitosis, it blocks separase/cut1 function, preventing the proteolysis of the cohesin complex and the subsequent segregation of the chromosomes. At the onset of anaphase, it is ubiquitinated, conducting to its destruction and to the liberation of cut1. This Schizosaccharomyces pombe (strain 972 / ATCC 24843) (Fission yeast) protein is Securin (cut2).